The primary structure comprises 1366 residues: Serine/threonine-protein kinase RUNKEL (1366 aa).

ATP-binding positions include 10-18 (IGHGKCSTV) and lysine 33. Aspartate 121 (proton acceptor) is an active-site residue. 4 disordered regions span residues 276–356 (TKPC…VNIL), 367–386 (QKEN…NENC), 398–502 (LDFD…DSSK), and 524–549 (PSRK…FSKK). Residues 283–302 (RNGDRPNKTPPKYREKDRKG) show a composition bias toward basic and acidic residues. Residues 304–313 (SKQNENSIQG) show a composition bias toward polar residues. A compositionally biased stretch (basic and acidic residues) spans 367 to 376 (QKENEKENYR). Over residues 398–414 (LDFDENNDDEGPDESEG) the composition is skewed to acidic residues. Residues 422-433 (QEERVMSHNENH) are compositionally biased toward basic and acidic residues. The segment covering 438–454 (VVSSNVPDENSSANETP) has biased composition (polar residues). HEAT repeat units follow at residues 595–633 (LTNG…HSTS), 638–675 (LANS…YIST), 699–737 (QVSN…QGAY), 835–872 (TEEK…NSRR), 878–907 (FCNA…AFVN), 908–945 (VIAS…RAPV), 946–986 (KTNA…LVEA), 992–1018 (DDFR…NGEI), 1019–1057 (IIRE…LLTE), 1072–1111 (ISNS…IKIS), 1279–1316 (TNLP…YACK), and 1329–1366 (GHDV…RLPR).

This sequence belongs to the protein kinase superfamily. Ser/Thr protein kinase family. As to quaternary structure, binds to microtubules (MT). As to expression, expressed in proliferating tissues of seedlings, lateral roots, young rosette leaves, siliques, flowers, embryos and stems (including apical meristem).

The protein localises to the cytoplasm. The protein resides in the cytoskeleton. It is found in the phragmoplast. Its subcellular location is the spindle. It carries out the reaction L-seryl-[protein] + ATP = O-phospho-L-seryl-[protein] + ADP + H(+). The catalysed reaction is L-threonyl-[protein] + ATP = O-phospho-L-threonyl-[protein] + ADP + H(+). Its function is as follows. Essential protein that regulates phragmoplast microtubule organization during cell plate expansion in cytokinesis during cell division, both somatic and syncytial. Required for endosperm cellularisation. In pollen development, involved in cellularisation during microsporogenesis by regulating radial microtubules (MT) organization in microspore mother cells. Seems to not have kinase activity. The protein is Serine/threonine-protein kinase RUNKEL of Arabidopsis thaliana (Mouse-ear cress).